The sequence spans 352 residues: Diacylglycerol acyltransferase/mycolyltransferase Ag85C (352 aa).

The signal sequence occupies residues 1-37 (MSFIEKVRKLRGAAATMPRRLAIAAVGASLLSGVAVA). Residue 86 to 87 (LR) coordinates substrate. Residues 102 to 112 (FEEFYQSGLSV) form a fibronectin-binding region. 2 residues coordinate substrate: S170 and N198. S170 functions as the Nucleophile in the catalytic mechanism. E274 is a catalytic residue. Substrate-binding positions include 276–279 (LTLR) and 306–308 (HSW). H306 is a catalytic residue. A disordered region spans residues 332–352 (TAAPAQPAQPAQPAQPAQPAT). The segment covering 333–352 (AAPAQPAQPAQPAQPAQPAT) has biased composition (low complexity).

This sequence belongs to the mycobacterial A85 antigen family. Homodimer.

Its subcellular location is the secreted. The enzyme catalyses an acyl-CoA + a 1,2-diacyl-sn-glycerol = a triacyl-sn-glycerol + CoA. The catalysed reaction is 2 alpha,alpha'-trehalose 6-mycolate = alpha,alpha'-trehalose 6,6'-bismycolate + alpha,alpha-trehalose. The antigen 85 proteins (FbpA, FbpB, FbpC) are responsible for the high affinity of mycobacteria to fibronectin, a large adhesive glycoprotein, which facilitates the attachment of M.tuberculosis to murine alveolar macrophages (AMs). They also help to maintain the integrity of the cell wall by catalyzing the transfer of mycolic acids to cell wall arabinogalactan and through the synthesis of alpha,alpha-trehalose dimycolate (TDM, cord factor). They catalyze the transfer of a mycoloyl residue from one molecule of alpha,alpha-trehalose monomycolate (TMM) to another TMM, leading to the formation of TDM. This chain is Diacylglycerol acyltransferase/mycolyltransferase Ag85C (fbpC), found in Mycobacterium avium.